A 293-amino-acid polypeptide reads, in one-letter code: Beta-porphyranase B (293 aa).

An N-terminal signal peptide occupies residues 1–21; sequence MKLSNQFLITITLLITSITFA. The 254-residue stretch at 38–291 folds into the GH16 domain; sequence QEWKLIENMS…WVRSWQLVDS (254 aa). Residues W67, R70, E156, E161, and E256 each contribute to the substrate site. The Nucleophile role is filled by E156. The active-site Proton donor is the E161.

The protein belongs to the glycosyl hydrolase 16 family.

It is found in the periplasm. The catalysed reaction is Hydrolysis of beta-D-galactopyranose-(1-&gt;4)-alpha-L-galactopyranose-6-sulfate linkages in porphyran.. In terms of biological role, cleaves the sulfated polysaccharide porphyran at the (1-&gt;4) linkages between beta-D-galactopyranose and alpha-L-galactopyranose-6-sulfate, forming mostly the disaccharide alpha-L-galactopyranose-6-sulfate-(1-&gt;3)-beta-D-galactose. Some longer oligosaccharides of even number of residues are also observed. Inactive on the non-sulfated agarose portion of the porphyran backbone. In contrast to PorA, tolerates the presence of 3-6-anhydro-L-galactose in subsite -2. This Zobellia galactanivorans (strain DSM 12802 / CCUG 47099 / CIP 106680 / NCIMB 13871 / Dsij) protein is Beta-porphyranase B (porB).